A 327-amino-acid polypeptide reads, in one-letter code: Serine/threonine-protein phosphatase PP1-1 (327 aa).

Mn(2+) contacts are provided by Asp-63, His-65, Asp-91, and Asn-123. Residue His-124 is the Proton donor of the active site. Residues His-172 and His-247 each coordinate Mn(2+). The interval 305-327 (GYQGSSQNWHMTPPRKNKTGNSK) is disordered. Thr-316 bears the Phosphothreonine; by CDC2 mark. Over residues 317 to 327 (PPRKNKTGNSK) the composition is skewed to basic residues.

It belongs to the PPP phosphatase family. PP-1 subfamily. In terms of assembly, oligomer. The cofactor is Mn(2+).

Its subcellular location is the nucleus. It carries out the reaction O-phospho-L-seryl-[protein] + H2O = L-seryl-[protein] + phosphate. It catalyses the reaction O-phospho-L-threonyl-[protein] + H2O = L-threonyl-[protein] + phosphate. Functionally, essential role in cell cycle control. PP1 is perhaps required for exit from mitosis. The protein is Serine/threonine-protein phosphatase PP1-1 (dis2) of Schizosaccharomyces pombe (strain 972 / ATCC 24843) (Fission yeast).